The primary structure comprises 124 residues: Holo-[acyl-carrier-protein] synthase (124 aa).

2 residues coordinate Mg(2+): Asp-5 and Glu-51.

It belongs to the P-Pant transferase superfamily. AcpS family. Requires Mg(2+) as cofactor.

The protein resides in the cytoplasm. It catalyses the reaction apo-[ACP] + CoA = holo-[ACP] + adenosine 3',5'-bisphosphate + H(+). Functionally, transfers the 4'-phosphopantetheine moiety from coenzyme A to a Ser of acyl-carrier-protein. In Hydrogenobaculum sp. (strain Y04AAS1), this protein is Holo-[acyl-carrier-protein] synthase.